Here is a 146-residue protein sequence, read N- to C-terminus: Holo-[acyl-carrier-protein] synthase (146 aa).

Mg(2+) is bound by residues Asp8 and Glu61.

The protein belongs to the P-Pant transferase superfamily. AcpS family. Mg(2+) serves as cofactor.

The protein localises to the cytoplasm. The enzyme catalyses apo-[ACP] + CoA = holo-[ACP] + adenosine 3',5'-bisphosphate + H(+). In terms of biological role, transfers the 4'-phosphopantetheine moiety from coenzyme A to a Ser of acyl-carrier-protein. The polypeptide is Holo-[acyl-carrier-protein] synthase (Rhodopseudomonas palustris (strain TIE-1)).